A 351-amino-acid chain; its full sequence is Terpene cyclase sdgD (351 aa).

The next 9 membrane-spanning stretches (helical) occupy residues 7–27, 62–82, 89–109, 126–146, 160–180, 193–213, 229–249, 281–301, and 316–336; these read INFI…TILI, TGVP…WPVI, LSLL…LLLL, WVGL…YCAI, IPHV…LVAL, VVVA…FMAS, IYIF…LASL, FLQW…VAVY, and LEVC…LLIW.

It belongs to the membrane-bound ascI terpene cyclase family.

It is found in the membrane. It participates in secondary metabolite biosynthesis. Functionally, epoxide hydrolase; part of the gene cluster that mediates the biosynthesis of the polyenes aspernidgulenes. The carbon backbone of aspernidgulenes is synthesized by the HR-PKS sdgA, which accepts acetyl-CoA as the starter unit and performs malonyl-CoA extensions as well as regioselective methylation and reduction. The resulting nonaketide offloads the HR-PKS by intramolecular lactonization to yield the 5,6-dihydro-alpha-pyrone-containing hexaenoic acids preaspernidgulene A1 and A2. The FAD-dependent monooxygenase sdgC then installs the first epoxide on the penultimate double bond. Subsequently, the FAD-dependent monooxygenase sdgF presumably generates a ketone intermediate through Meinwald rearrangement involving a hydride shift. Next, sdgC introduces another epoxide on the last olefin of the ketone intermediate after E/Z isomerization. The epoxide hydrolase sdgD then catalyzes stereospecific cyclization of the 5,6-dihydro-alpha-pyrone and opening of the epoxide ring to form an oxygenated trimethylcyclopentanone and an oxabicyclo[2.2.1]heptane unit. Finally, the bicyclic unit undergoes hydrolytic cleavage, either spontaneously or catalyzed by sdgD, to assemble the dimethyl-gamma-lactone moiety in aspernidgulene A1. This Emericella nidulans (strain FGSC A4 / ATCC 38163 / CBS 112.46 / NRRL 194 / M139) (Aspergillus nidulans) protein is Terpene cyclase sdgD.